The chain runs to 735 residues: Alpha-adducin (735 aa).

The residue at position 1 (M1) is an N-acetylmethionine. The span at 1 to 11 (MNGDTRAAVVT) shows a compositional bias: low complexity. Residues 1-21 (MNGDTRAAVVTSPPPTTAPHK) form a disordered region. S12 is modified (phosphoserine). S59 carries the post-translational modification Phosphoserine; by PKA. Residue S64 is modified to Phosphoserine. Residue T331 is modified to Phosphothreonine. S334, S353, and S355 each carry phosphoserine. T358 bears the Phosphothreonine mark. A phosphoserine mark is found at S364 and S366. At S408 the chain carries Phosphoserine; by PKA. Disordered stretches follow at residues 418 to 486 (GHSF…SAVP) and 576 to 735 (RREV…KSDS). S427 carries the phosphoserine modification. Phosphothreonine is present on T429. S431 is modified (phosphoserine). Residue S436 is modified to Phosphoserine; by PKA. T445 bears the Phosphothreonine; by ROCK2 mark. Residues S464 and S465 each carry the phosphoserine modification. T480 is subject to Phosphothreonine; by ROCK2. S481 is modified (phosphoserine; by PKA). Residues 576–601 (RREVERKQKGSEENLDETREQKEKSP) show a composition bias toward basic and acidic residues. Phosphoserine is present on residues S586, S600, and S605. T610 is modified (phosphothreonine). S613 is modified (phosphoserine). T614 is modified (phosphothreonine). Positions 678–712 (EPASASAPGAEEVASPATEEGSPMDPGSDGSPGKS) are enriched in low complexity. S705, S708, and S712 each carry phosphoserine. Over residues 713–735 (PSKKKKKFRTPSFLKKSKKKSDS) the composition is skewed to basic residues. Residue S714 is modified to Phosphoserine; by PKC. The tract at residues 715 to 732 (KKKKKFRTPSFLKKSKKK) is interaction with calmodulin. S724 carries the post-translational modification Phosphoserine; by PKA and PKC.

This sequence belongs to the aldolase class II family. Adducin subfamily. As to quaternary structure, heterodimer of an alpha and a beta subunit or an alpha and a gamma subunit.

Its subcellular location is the cytoplasm. It is found in the cytoskeleton. The protein resides in the cell membrane. Membrane-cytoskeleton-associated protein that promotes the assembly of the spectrin-actin network. Binds to calmodulin. The polypeptide is Alpha-adducin (Add1) (Rattus norvegicus (Rat)).